A 284-amino-acid chain; its full sequence is tRNA pseudouridine synthase A (284 aa).

Asp62 functions as the Nucleophile in the catalytic mechanism. Tyr120 serves as a coordination point for substrate.

Belongs to the tRNA pseudouridine synthase TruA family. As to quaternary structure, homodimer.

It catalyses the reaction uridine(38/39/40) in tRNA = pseudouridine(38/39/40) in tRNA. Its function is as follows. Formation of pseudouridine at positions 38, 39 and 40 in the anticodon stem and loop of transfer RNAs. This is tRNA pseudouridine synthase A from Thermosynechococcus vestitus (strain NIES-2133 / IAM M-273 / BP-1).